The primary structure comprises 178 residues: uncharacterized protein (178 aa).

Residues 7–29 traverse the membrane as a helical segment; the sequence is FFVIFSILWGSLFLFSIIGSLGT.

The protein localises to the membrane. This is an uncharacterized protein from Bacillus subtilis (strain 168).